The chain runs to 301 residues: Inosose dehydratase (301 aa).

It belongs to the IolE/MocC family. Glutathione is required as a cofactor. The cofactor is Co(2+). It depends on Mn(2+) as a cofactor.

The enzyme catalyses scyllo-inosose = 3D-3,5/4-trihydroxycyclohexane-1,2-dione + H2O. It functions in the pathway polyol metabolism; myo-inositol degradation into acetyl-CoA; acetyl-CoA from myo-inositol: step 2/7. In terms of biological role, catalyzes the dehydration of inosose (2-keto-myo-inositol, 2KMI or 2,4,6/3,5-pentahydroxycyclohexanone) to 3D-(3,5/4)-trihydroxycyclohexane-1,2-dione (D-2,3-diketo-4-deoxy-epi-inositol). This chain is Inosose dehydratase, found in Lacticaseibacillus casei (strain BL23) (Lactobacillus casei).